Consider the following 380-residue polypeptide: Calreticulin-3 (380 aa).

Positions 1–19 (MVSARALLWAICVLRVALA) are cleaved as a signal peptide. The segment at 20-197 (TVYFQEEFLD…GQSIESGSIE (178 aa)) is N-domain. Asn42 carries N-linked (GlcNAc...) asparagine glycosylation. An alpha-D-glucoside-binding residues include Tyr109, Lys111, Tyr128, and Asp135. A disulfide bridge connects residues Cys137 and Cys163. 7 repeat units span residues 191–202 (IESGSIEYDWNL), 209–220 (EKTSLDSRDWDQ), 222–231 (EGSKVQDWEK), 235–246 (DAGASKPSDWNS), 250–256 (GDWLQKP), 260–268 (DGLKAEGID), and 270–280 (DVWLHQKMRPA). A 4 X approximate repeats region spans residues 191–246 (IESGSIEYDWNLTSLRKTEKTSLDSRDWDQVEGSKVQDWEKHFLDAGASKPSDWNS). Residues 198-291 (YDWNLTSLRK…YLTQYDLSEF (94 aa)) are P-domain. Asn201 carries an N-linked (GlcNAc...) asparagine glycan. The interval 250–280 (GDWLQKPPYEDGLKAEGIDKDVWLHQKMRPA) is 3 X approximate repeats. The interval 292–380 (ENIGAIGLEL…FSRFHRQGEL (89 aa)) is C-domain. Glu300 provides a ligand contact to an alpha-D-glucoside. The Prevents secretion from ER signature appears at 377–380 (QGEL).

This sequence belongs to the calreticulin family. As to quaternary structure, component of an EIF2 complex at least composed of CELF1/CUGBP1, CALR, CALR3, EIF2S1, EIF2S2, HSP90B1 and HSPA5. As to expression, testis specific, absent in mature sperm.

It is found in the endoplasmic reticulum lumen. In terms of biological role, CALR3 capacity for calcium-binding may be absent or much lower than that of CALR. During spermatogenesis, may act as a lectin-independent chaperone for specific client proteins such as ADAM3. Required for sperm fertility. This is Calreticulin-3 (Calr3) from Mus musculus (Mouse).